We begin with the raw amino-acid sequence, 329 residues long: Thioredoxin-like fold domain-containing protein MRL7L homolog, chloroplastic (329 aa).

A chloroplast-targeting transit peptide spans 1–46; the sequence is MALQSCCSSSASVPATCSALCLAEATRAASLFVRPRAAARRLVLAR. The interval 58 to 91 is disordered; sequence AVQLVLGGRARDDGSESESSDDEDDDEPMQMTDE. Positions 72 to 85 are enriched in acidic residues; sequence SESESSDDEDDDEP.

Its subcellular location is the plastid. The protein localises to the chloroplast stroma. In terms of biological role, plays an essential role in early steps of chloroplast development. Involved in the regulation of plastid gene expression. Required for the proper function of the plastid transcriptional machinery and protein accumulation in thylakoid membranes. May function as molecular chaperone to ensure proper organization of the nucleoids in chloroplasts. The protein is Thioredoxin-like fold domain-containing protein MRL7L homolog, chloroplastic of Oryza sativa subsp. japonica (Rice).